We begin with the raw amino-acid sequence, 115 residues long: SOSS complex subunit C homolog (115 aa).

This sequence belongs to the SOSS-C family.

The polypeptide is SOSS complex subunit C homolog (Drosophila grimshawi (Hawaiian fruit fly)).